The primary structure comprises 417 residues: uncharacterized protein (417 aa).

9 helical membrane-spanning segments follow: residues 1-21, 32-52, 96-116, 168-188, 192-212, 261-281, 286-306, 351-371, and 392-412; these read MSVL…VLLS, VVGA…VPAG, VLPI…LGIM, LFAI…AGYA, VPLT…LLFA, IAFV…GGWF, LTLQ…IGVT, AIIT…ILIG, and VIAG…FIGL.

Belongs to the concentrative nucleoside transporter (CNT) (TC 2.A.41) family.

Its subcellular location is the cell inner membrane. This is an uncharacterized protein from Haemophilus influenzae (strain ATCC 51907 / DSM 11121 / KW20 / Rd).